Consider the following 250-residue polypeptide: Cruxrhodopsin-3 (250 aa).

Residues 1–9 (MPAPEGEAI) are Extracellular-facing. Residues 10 to 27 (WLWLGTAGMFLGMLYFIA) traverse the membrane as a helical segment. Residues 28 to 41 (RGWGETDSRRQKFY) are Cytoplasmic-facing. The chain crosses the membrane as a helical span at residues 42–60 (IATILITAIAFVNYLAMAL). Topologically, residues 61–77 (GFGLTIVEIAGEQRPIY) are extracellular. The helical transmembrane segment at 78-94 (WARYSDWLFTTPLLLYD) threads the bilayer. Topologically, residues 95–105 (LGLLAGADRNT) are cytoplasmic. A helical transmembrane segment spans residues 106 to 125 (ISSLVSLDVLMIGTGLVATL). The Extracellular portion of the chain corresponds to 126-138 (SAGSGVLSAGAER). A helical membrane pass occupies residues 139 to 158 (LVWWGISTAFLLVLLYFLFS). Residues 159–176 (SLSGRVADLPSDTRSTFK) lie on the Cytoplasmic side of the membrane. A helical transmembrane segment spans residues 177–195 (TLRNLVTVVWLVYPVWWLV). Residues 196 to 207 (GTEGIGLVGIGI) lie on the Extracellular side of the membrane. Residues 208–227 (ETAGFMVIDLVAKVGFGIIL) form a helical membrane-spanning segment. Lys220 carries the N6-(retinylidene)lysine modification. Topologically, residues 228 to 250 (LRSHGVLDGAAETTGAGATATAD) are cytoplasmic.

This sequence belongs to the archaeal/bacterial/fungal opsin family. Homotrimer. Binds bacterioruberin in the crevice between neighboring subunits.

Its subcellular location is the cell membrane. Its function is as follows. Light-driven proton pump. This Haloarcula vallismortis (Halobacterium vallismortis) protein is Cruxrhodopsin-3 (cop3).